Here is a 225-residue protein sequence, read N- to C-terminus: Probable septum site-determining protein MinC (225 aa).

Belongs to the MinC family. In terms of assembly, interacts with MinD and FtsZ.

In terms of biological role, cell division inhibitor that blocks the formation of polar Z ring septums. Rapidly oscillates between the poles of the cell to destabilize FtsZ filaments that have formed before they mature into polar Z rings. Prevents FtsZ polymerization. The sequence is that of Probable septum site-determining protein MinC from Listeria monocytogenes serotype 4a (strain HCC23).